The chain runs to 374 residues: Probable phosphoserine aminotransferase (374 aa).

Arg-48 serves as a coordination point for L-glutamate. Pyridoxal 5'-phosphate-binding positions include 82 to 83, Trp-110, Thr-160, Asp-183, and Gln-206; that span reads AS. At Lys-207 the chain carries N6-(pyridoxal phosphate)lysine. Position 248-249 (248-249) interacts with pyridoxal 5'-phosphate; it reads NT.

The protein belongs to the class-V pyridoxal-phosphate-dependent aminotransferase family. SerC subfamily. Homodimer. Pyridoxal 5'-phosphate is required as a cofactor.

The enzyme catalyses O-phospho-L-serine + 2-oxoglutarate = 3-phosphooxypyruvate + L-glutamate. The catalysed reaction is 4-(phosphooxy)-L-threonine + 2-oxoglutarate = (R)-3-hydroxy-2-oxo-4-phosphooxybutanoate + L-glutamate. The protein operates within amino-acid biosynthesis; L-serine biosynthesis; L-serine from 3-phospho-D-glycerate: step 2/3. It participates in cofactor biosynthesis; pyridoxine 5'-phosphate biosynthesis; pyridoxine 5'-phosphate from D-erythrose 4-phosphate: step 3/5. Functionally, catalyzes the reversible conversion of 3-phosphohydroxypyruvate to phosphoserine and of 3-hydroxy-2-oxo-4-phosphonooxybutanoate to phosphohydroxythreonine. This is Probable phosphoserine aminotransferase (serC) from Dictyostelium discoideum (Social amoeba).